A 125-amino-acid chain; its full sequence is MSNPQQLRYSKEHEWLSGAEDGVSTVGITEHAANALGDVVYVQLPEVGDTVTAGETCGELESTKSVSDLYSPVTGEVVEANQDVVDDPSLVNSAPFEGGWLFKVRVAEEPKDLLSADEYTEFSGS.

The region spanning Val-23 to Arg-105 is the Lipoyl-binding domain. The residue at position 64 (Lys-64) is an N6-lipoyllysine.

Belongs to the GcvH family. The glycine cleavage system is composed of four proteins: P, T, L and H. The cofactor is (R)-lipoate.

Functionally, the glycine cleavage system catalyzes the degradation of glycine. The H protein shuttles the methylamine group of glycine from the P protein to the T protein. In Streptomyces avermitilis (strain ATCC 31267 / DSM 46492 / JCM 5070 / NBRC 14893 / NCIMB 12804 / NRRL 8165 / MA-4680), this protein is Glycine cleavage system H protein.